The sequence spans 449 residues: Glucose-6-phosphate isomerase (449 aa).

The active-site Proton donor is Glu-291. Catalysis depends on residues His-312 and Lys-426.

The protein belongs to the GPI family.

The protein localises to the cytoplasm. The catalysed reaction is alpha-D-glucose 6-phosphate = beta-D-fructose 6-phosphate. The protein operates within carbohydrate biosynthesis; gluconeogenesis. Its pathway is carbohydrate degradation; glycolysis; D-glyceraldehyde 3-phosphate and glycerone phosphate from D-glucose: step 2/4. Its function is as follows. Catalyzes the reversible isomerization of glucose-6-phosphate to fructose-6-phosphate. In Streptococcus pyogenes serotype M1, this protein is Glucose-6-phosphate isomerase.